The sequence spans 190 residues: uncharacterized protein (190 aa).

The first 28 residues, Met1–Ser28, serve as a signal peptide directing secretion.

This is an uncharacterized protein from Haemophilus influenzae (strain ATCC 51907 / DSM 11121 / KW20 / Rd).